Consider the following 473-residue polypeptide: Cholesterol 22-monohydroxylase CYP90B52 (473 aa).

The chain crosses the membrane as a helical span at residues 2–22 (EGLLLLLPTAIIALYLYISLI). Cys-422 provides a ligand contact to heme.

Belongs to the cytochrome P450 family. In terms of tissue distribution, mainly expressed in leaves and roots and, at low levels, in fruits and stems.

It is found in the membrane. It catalyses the reaction cholesterol + reduced [NADPH--hemoprotein reductase] + O2 = (22S)-22-hydroxycholesterol + oxidized [NADPH--hemoprotein reductase] + H2O + H(+). Its pathway is steroid metabolism; cholesterol metabolism. Functionally, canonical brassinosteroid (BR)-biosynthetic enzyme capable of converting cholesterol to 22S-hydroxycholesterol via sterol-C22 hydroxylation. This chain is Cholesterol 22-monohydroxylase CYP90B52, found in Paris polyphylla (Daiswa polyphylla).